The primary structure comprises 229 residues: Potassium/proton antiporter CemA (229 aa).

2 consecutive transmembrane segments (helical) span residues 7 to 27 and 106 to 126; these read LASL…SISF and IISH…YFIL.

It belongs to the CemA family.

It is found in the plastid. Its subcellular location is the chloroplast inner membrane. It catalyses the reaction K(+)(in) + H(+)(out) = K(+)(out) + H(+)(in). Functionally, contributes to K(+)/H(+) antiport activity by supporting proton efflux to control proton extrusion and homeostasis in chloroplasts in a light-dependent manner to modulate photosynthesis. Prevents excessive induction of non-photochemical quenching (NPQ) under continuous-light conditions. Indirectly promotes efficient inorganic carbon uptake into chloroplasts. The polypeptide is Potassium/proton antiporter CemA (Cycas taitungensis (Prince sago)).